The chain runs to 413 residues: Multifunctional CCA protein (413 aa).

Residues Gly8 and Arg11 each coordinate ATP. The CTP site is built by Gly8 and Arg11. Positions 21 and 23 each coordinate Mg(2+). ATP-binding residues include Arg91, Arg137, and Arg140. The CTP site is built by Arg91, Arg137, and Arg140. The 102-residue stretch at 228 to 329 folds into the HD domain; that stretch reads TGVHTLMTLS…VKLFDAIDAW (102 aa).

It belongs to the tRNA nucleotidyltransferase/poly(A) polymerase family. Bacterial CCA-adding enzyme type 1 subfamily. As to quaternary structure, monomer. Can also form homodimers and oligomers. Mg(2+) is required as a cofactor. Requires Ni(2+) as cofactor.

The enzyme catalyses a tRNA precursor + 2 CTP + ATP = a tRNA with a 3' CCA end + 3 diphosphate. It carries out the reaction a tRNA with a 3' CCA end + 2 CTP + ATP = a tRNA with a 3' CCACCA end + 3 diphosphate. Its function is as follows. Catalyzes the addition and repair of the essential 3'-terminal CCA sequence in tRNAs without using a nucleic acid template. Adds these three nucleotides in the order of C, C, and A to the tRNA nucleotide-73, using CTP and ATP as substrates and producing inorganic pyrophosphate. tRNA 3'-terminal CCA addition is required both for tRNA processing and repair. Also involved in tRNA surveillance by mediating tandem CCA addition to generate a CCACCA at the 3' terminus of unstable tRNAs. While stable tRNAs receive only 3'-terminal CCA, unstable tRNAs are marked with CCACCA and rapidly degraded. In Salmonella paratyphi A (strain ATCC 9150 / SARB42), this protein is Multifunctional CCA protein.